The sequence spans 219 residues: Lipoprotein-releasing system ATP-binding protein LolD (219 aa).

The ABC transporter domain occupies 5–219; sequence LKAGDIFKTY…KVVMQDGVII (215 aa). Residue 37–44 coordinates ATP; sequence GASGAGKS.

This sequence belongs to the ABC transporter superfamily. Lipoprotein translocase (TC 3.A.1.125) family. In terms of assembly, the complex is composed of two ATP-binding proteins (LolD) and two transmembrane proteins (LolC and LolE).

It is found in the cell inner membrane. Its function is as follows. Part of the ABC transporter complex LolCDE involved in the translocation of mature outer membrane-directed lipoproteins, from the inner membrane to the periplasmic chaperone, LolA. Responsible for the formation of the LolA-lipoprotein complex in an ATP-dependent manner. This Cytophaga hutchinsonii (strain ATCC 33406 / DSM 1761 / CIP 103989 / NBRC 15051 / NCIMB 9469 / D465) protein is Lipoprotein-releasing system ATP-binding protein LolD.